The following is a 90-amino-acid chain: Putative cytochrome c oxidase subunit 5b-like (90 aa).

Zn(2+)-binding residues include C43, C67, and C70.

This sequence belongs to the cytochrome c oxidase subunit 5B (TC 3.D.4.11) family.

This Arabidopsis thaliana (Mouse-ear cress) protein is Putative cytochrome c oxidase subunit 5b-like.